A 200-amino-acid chain; its full sequence is NADH-quinone oxidoreductase subunit C (200 aa).

It belongs to the complex I 30 kDa subunit family. NDH-1 is composed of 14 different subunits. Subunits NuoB, C, D, E, F, and G constitute the peripheral sector of the complex.

The protein resides in the cell inner membrane. The catalysed reaction is a quinone + NADH + 5 H(+)(in) = a quinol + NAD(+) + 4 H(+)(out). Functionally, NDH-1 shuttles electrons from NADH, via FMN and iron-sulfur (Fe-S) centers, to quinones in the respiratory chain. The immediate electron acceptor for the enzyme in this species is believed to be ubiquinone. Couples the redox reaction to proton translocation (for every two electrons transferred, four hydrogen ions are translocated across the cytoplasmic membrane), and thus conserves the redox energy in a proton gradient. In Rhizobium rhizogenes (strain K84 / ATCC BAA-868) (Agrobacterium radiobacter), this protein is NADH-quinone oxidoreductase subunit C.